The chain runs to 280 residues: UPF0494 membrane protein C750.06c (280 aa).

4 helical membrane passes run 107 to 127 (WPLLIIWSIIIVFAVDKKFEV), 144 to 164 (IWVPIAIYVCLLVLMLLSLIF), 178 to 198 (VIIAVLGAVLGMIIAVLGMII), and 199 to 219 (AALGMIIAALGATITGLLYFG).

The protein belongs to the UPF0494 family.

The protein resides in the cytoplasm. It localises to the vacuole. Its subcellular location is the membrane. The chain is UPF0494 membrane protein C750.06c from Schizosaccharomyces pombe (strain 972 / ATCC 24843) (Fission yeast).